Reading from the N-terminus, the 434-residue chain is Glutamyl-tRNA reductase (434 aa).

Substrate is bound by residues 52–55, S115, 120–122, and Q126; these read TCNR and ETQ. C53 serves as the catalytic Nucleophile. Position 195-200 (195-200) interacts with NADP(+); the sequence is GAGEMI.

It belongs to the glutamyl-tRNA reductase family. As to quaternary structure, homodimer.

The enzyme catalyses (S)-4-amino-5-oxopentanoate + tRNA(Glu) + NADP(+) = L-glutamyl-tRNA(Glu) + NADPH + H(+). The protein operates within porphyrin-containing compound metabolism; protoporphyrin-IX biosynthesis; 5-aminolevulinate from L-glutamyl-tRNA(Glu): step 1/2. In terms of biological role, catalyzes the NADPH-dependent reduction of glutamyl-tRNA(Glu) to glutamate 1-semialdehyde (GSA). In Cupriavidus pinatubonensis (strain JMP 134 / LMG 1197) (Cupriavidus necator (strain JMP 134)), this protein is Glutamyl-tRNA reductase.